The sequence spans 449 residues: Tubulin alpha-8 chain (449 aa).

The short motif at 1-4 (MREC) is the MREC motif element. GTP contacts are provided by Gln-11, Glu-71, Ser-140, Gly-144, Thr-145, Thr-179, Asn-206, and Asn-228. Residue Glu-71 coordinates Mg(2+). Glu-254 is an active-site residue.

The protein belongs to the tubulin family. As to quaternary structure, dimer of alpha and beta chains. A typical microtubule is a hollow water-filled tube with an outer diameter of 25 nm and an inner diameter of 15 nM. Alpha-beta heterodimers associate head-to-tail to form protofilaments running lengthwise along the microtubule wall with the beta-tubulin subunit facing the microtubule plus end conferring a structural polarity. Microtubules usually have 13 protofilaments but different protofilament numbers can be found in some organisms and specialized cells. Mg(2+) is required as a cofactor. In terms of processing, some glutamate residues at the C-terminus are polyglycylated, resulting in polyglycine chains on the gamma-carboxyl group. Glycylation is mainly limited to tubulin incorporated into axonemes (cilia and flagella) whereas glutamylation is prevalent in neuronal cells, centrioles, axonemes, and the mitotic spindle. Both modifications can coexist on the same protein on adjacent residues, and lowering polyglycylation levels increases polyglutamylation, and reciprocally. Cilia and flagella glycylation is required for their stability and maintenance. Flagella glycylation controls sperm motility. Post-translationally, some glutamate residues at the C-terminus are polyglutamylated, resulting in polyglutamate chains on the gamma-carboxyl group. Polyglutamylation plays a key role in microtubule severing by spastin (SPAST). SPAST preferentially recognizes and acts on microtubules decorated with short polyglutamate tails: severing activity by SPAST increases as the number of glutamates per tubulin rises from one to eight, but decreases beyond this glutamylation threshold. Glutamylation is also involved in cilia motility. The C-terminal phenylalanine residue is cleaved by MATCAP1/KIAA0895L.

It is found in the cytoplasm. It localises to the cytoskeleton. The enzyme catalyses GTP + H2O = GDP + phosphate + H(+). In terms of biological role, tubulin is the major constituent of microtubules, a cylinder consisting of laterally associated linear protofilaments composed of alpha- and beta-tubulin heterodimers. Microtubules grow by the addition of GTP-tubulin dimers to the microtubule end, where a stabilizing cap forms. Below the cap, tubulin dimers are in GDP-bound state, owing to GTPase activity of alpha-tubulin. The protein is Tubulin alpha-8 chain (TUBA8) of Bos taurus (Bovine).